A 795-amino-acid polypeptide reads, in one-letter code: Multiple C2 domain and transmembrane region protein 12 (795 aa).

C2 domains lie at arginine 24–tyrosine 142, valine 180–alanine 298, and tyrosine 341–tyrosine 463. Positions 57, 109, and 113 each coordinate Ca(2+). Transmembrane regions (helical) follow at residues cysteine 590–isoleucine 610, tryptophan 612–leucine 632, phenylalanine 730–tryptophan 750, and leucine 752–phenylalanine 772.

Belongs to the MCTP family. Ca(2+) is required as a cofactor. In terms of tissue distribution, expressed in root vascular tissues and meristems. Observed in flowers.

It is found in the endoplasmic reticulum membrane. May function as a signaling molecule by regulating the trafficking of other regulators. This chain is Multiple C2 domain and transmembrane region protein 12, found in Arabidopsis thaliana (Mouse-ear cress).